The following is a 162-amino-acid chain: Sorting nexin-3 (162 aa).

A2 bears the N-acetylalanine mark. The PX domain maps to 27 to 151 (NFLEIDVSNP…HMFLQDEIID (125 aa)). Position 43 is an omega-N-methylarginine (R43). A 1,2-diacyl-sn-glycero-3-phospho-(1D-myo-inositol-3-phosphate) contacts are provided by R70, S72, K95, and R118. A Phosphoserine modification is found at S72. K95 participates in a covalent cross-link: Glycyl lysine isopeptide (Lys-Gly) (interchain with G-Cter in SUMO2). The segment at 147-162 (DEIIDKSYTPSKIRHA) is binds predominantly to PtdIns(P5) and weaker to PtdIns(P3) abd PtdIns(P4); involved in neurite outgrowth regulation.

The protein belongs to the sorting nexin family. Interacts with VPS26A, VPS29. Interacts with VPS35; the interaction with VPS35 is direct. The association with the retromer CSC subcomplex subunits is proposed to represent a functional distinct retromer variant described as SNX3-retromer complex. Interacts with USP10 and SCNN1A. Interacts with TRFC. Interacts with SNX8; 2 molecules of SNX8 seems to associate with one molecule of SNX3. Interacts with PTPRU. Interacts with MON2 and DOP1B. In terms of processing, ubiquitinated, leading to its proteasomal degradation. Deubiquitinated by USP10. In terms of tissue distribution, highly expressed in developing red cells and hematopoietic tissues.

It is found in the early endosome. The protein resides in the cytoplasmic vesicle. The protein localises to the phagosome. Functionally, phosphoinositide-binding protein required for multivesicular body formation. Specifically binds phosphatidylinositol 3-phosphate (PtdIns(P3)). Can also bind phosphatidylinositol 4-phosphate (PtdIns(P4)), phosphatidylinositol 5-phosphate (PtdIns(P5)) and phosphatidylinositol 3,5-biphosphate (PtdIns(3,5)P2). Plays a role in protein transport between cellular compartments. Together with RAB7A facilitates endosome membrane association of the retromer cargo-selective subcomplex (CSC). May act in part as component of the SNX3-retromer complex which mediates the retrograde endosome-to-TGN transport of WLS distinct from the SNX-BAR retromer pathway. Promotes stability and cell surface expression of epithelial sodium channel (ENAC) subunits SCNN1A and SCNN1G. Not involved in EGFR degradation. Involved in the regulation of phagocytosis in dendritic cells possibly by regulating EEA1 recruitment to the nascent phagosomes. Involved in iron homeostasis through regulation of endocytic recycling of the transferrin receptor Tfrc presuambly by delivering the transferrin:transferrin receptor complex to recycling endosomes; the function may involve the CSC retromer subcomplex. Involved in regulation of neurite outgrowth in primary neurons. This chain is Sorting nexin-3 (Snx3), found in Mus musculus (Mouse).